The chain runs to 773 residues: C-Maf-inducing protein (773 aa).

Positions 1–30 (MDVTSSSGGGGDPRQIEETKPLLGGDVSAP) are disordered. The 110-residue stretch at 54–163 (LLQEGDIQVC…HSLQWKKKIY (110 aa)) folds into the PH domain. Phosphoserine occurs at positions 349, 377, 382, and 660. 4 LRR repeats span residues 663–686 (NLENLSLAFTNVTSACAEHLIKLP), 687–707 (SLKQLNLWSTQFGDAGLRLLS), 712–732 (MLQVLNLCETPVTDAGLLALS), and 736–756 (SLCSLNMNSTKLSADTYEDLK).

Interacts with FLNA. Isoform 1 is expressed in peripheral blood mononuclear cells and kidney. Lower expression in brain and liver. Expression is down-regulated in activated cells. Isoform 2 is expressed in lymphocyte precursors, however, expression shuts down during maturation and differentiation in thymus and fetal liver.

The protein localises to the nucleus. It localises to the cytoplasm. Plays a role in T-cell signaling pathway. Isoform 2 may play a role in T-helper 2 (Th2) signaling pathway and seems to represent the first proximal signaling protein that links T-cell receptor-mediated signal to the activation of c-Maf Th2 specific factor. The sequence is that of C-Maf-inducing protein (CMIP) from Homo sapiens (Human).